A 293-amino-acid polypeptide reads, in one-letter code: MHKDIATPGRTKEILARYGFSFKKSLGQNFLIDTNILRKIVDAAGISGDTGAIEIGPGIGALTEQLARRAKKVVAFEIDSRLLPILADTLSAYDNVRIIHQDVLKADLHAVIAEEFAEVSDRMVVANLPYYVTTPIIMKLLTERLPIRGMVVMMQKEVADRLAAKPGTKDYGSLTIAVQYYTEAEVVMTVPRTVFMPQPNVDSAVIRLTKRSHPPVAVEDEEVFFQVVRASFAQRRKTLLNNLLNNLPDGKEKKEQIERALDAVGIDPRRRGETLDMAEFASLSNALMPLFRV.

Residues asparagine 29, leucine 31, glycine 56, glutamate 77, aspartate 102, and asparagine 127 each coordinate S-adenosyl-L-methionine.

It belongs to the class I-like SAM-binding methyltransferase superfamily. rRNA adenine N(6)-methyltransferase family. RsmA subfamily.

It localises to the cytoplasm. It carries out the reaction adenosine(1518)/adenosine(1519) in 16S rRNA + 4 S-adenosyl-L-methionine = N(6)-dimethyladenosine(1518)/N(6)-dimethyladenosine(1519) in 16S rRNA + 4 S-adenosyl-L-homocysteine + 4 H(+). Its function is as follows. Specifically dimethylates two adjacent adenosines (A1518 and A1519) in the loop of a conserved hairpin near the 3'-end of 16S rRNA in the 30S particle. May play a critical role in biogenesis of 30S subunits. This Geobacillus thermodenitrificans (strain NG80-2) protein is Ribosomal RNA small subunit methyltransferase A.